Consider the following 254-residue polypeptide: Alcohol dehydrogenase 1 (254 aa).

10–33 contributes to the NAD(+) binding site; it reads FVAGLGGIGLDTSREIVKSGPKNL. Residue Ser138 participates in substrate binding. Tyr151 functions as the Proton acceptor in the catalytic mechanism.

The protein belongs to the short-chain dehydrogenases/reductases (SDR) family. In terms of assembly, homodimer.

It catalyses the reaction a primary alcohol + NAD(+) = an aldehyde + NADH + H(+). The catalysed reaction is a secondary alcohol + NAD(+) = a ketone + NADH + H(+). The chain is Alcohol dehydrogenase 1 (Adh1) from Drosophila montana (Fruit fly).